The sequence spans 245 residues: Uridylate kinase (245 aa).

18–21 (KLSG) is a binding site for ATP. G60 lines the UMP pocket. Residues G61 and R65 each coordinate ATP. UMP-binding positions include D80 and 141 to 148 (TGNPFFTT). Residues T168, Y174, and D177 each coordinate ATP.

The protein belongs to the UMP kinase family. Homohexamer.

The protein localises to the cytoplasm. It carries out the reaction UMP + ATP = UDP + ADP. It functions in the pathway pyrimidine metabolism; CTP biosynthesis via de novo pathway; UDP from UMP (UMPK route): step 1/1. Inhibited by UTP. Catalyzes the reversible phosphorylation of UMP to UDP. This is Uridylate kinase from Pseudomonas paraeruginosa (strain DSM 24068 / PA7) (Pseudomonas aeruginosa (strain PA7)).